A 389-amino-acid polypeptide reads, in one-letter code: E3 ubiquitin-protein ligase E3D (389 aa).

At alanine 2 the chain carries N-acetylalanine. The BRAT1-like motif signature appears at 129–159 (PLPSENWGALVGEWCCHPDPFANKPLHPQEN). Position 144 (cysteine 144) interacts with Zn(2+). The segment at 235 to 257 (QSSERSFPIIPRPRFVQSVIAQC) is interaction with UBE2C. Residues 353–389 (LPSATCLELLLILSKSNANLPSSLRHMNSFQVAFLKI) form an HECT-like region.

In terms of assembly, interacts with UBE2C/UbcH10 (E2 ubiquitin-conjugating enzyme). In vitro, interacts with cyclin-B. Post-translationally, ubiquitinated by UBCH10 (E2 ubiquitin-conjugating enzyme).

Its subcellular location is the cytoplasm. The catalysed reaction is S-ubiquitinyl-[E2 ubiquitin-conjugating enzyme]-L-cysteine + [acceptor protein]-L-lysine = [E2 ubiquitin-conjugating enzyme]-L-cysteine + N(6)-ubiquitinyl-[acceptor protein]-L-lysine.. The protein operates within protein modification; protein ubiquitination. Its function is as follows. E3 ubiquitin-protein ligase which accepts ubiquitin from specific E2 ubiquitin-conjugating enzymes, and transfers it to substrates, generally promoting their degradation by the proteasome. Independently of its E3 ubiquitin-protein ligase activity, acts as an inhibitor of CPSF3 endonuclease activity by blocking CPSF3 active site. In Pongo abelii (Sumatran orangutan), this protein is E3 ubiquitin-protein ligase E3D (UBE3D).